A 541-amino-acid chain; its full sequence is Glucose-6-phosphate isomerase (541 aa).

The active-site Proton donor is E346. Catalysis depends on residues H377 and K506.

The protein belongs to the GPI family.

It localises to the cytoplasm. The catalysed reaction is alpha-D-glucose 6-phosphate = beta-D-fructose 6-phosphate. Its pathway is carbohydrate biosynthesis; gluconeogenesis. The protein operates within carbohydrate degradation; glycolysis; D-glyceraldehyde 3-phosphate and glycerone phosphate from D-glucose: step 2/4. Catalyzes the reversible isomerization of glucose-6-phosphate to fructose-6-phosphate. This chain is Glucose-6-phosphate isomerase, found in Rhizobium meliloti (strain 1021) (Ensifer meliloti).